The chain runs to 81 residues: Beta-catenin-interacting protein 1 (81 aa).

Residue Ser-59 is modified to Phosphoserine.

The protein belongs to the CTNNBIP1 family. As to quaternary structure, binds CTNNB1.

It is found in the cytoplasm. Its subcellular location is the nucleus. Its function is as follows. Prevents the interaction between CTNNB1 and TCF family members, and acts as a negative regulator of the Wnt signaling pathway. This Bos taurus (Bovine) protein is Beta-catenin-interacting protein 1 (CTNNBIP1).